A 469-amino-acid chain; its full sequence is 3-isopropylmalate dehydratase large subunit (469 aa).

[4Fe-4S] cluster contacts are provided by cysteine 347, cysteine 408, and cysteine 411.

It belongs to the aconitase/IPM isomerase family. LeuC type 1 subfamily. Heterodimer of LeuC and LeuD. It depends on [4Fe-4S] cluster as a cofactor.

The enzyme catalyses (2R,3S)-3-isopropylmalate = (2S)-2-isopropylmalate. Its pathway is amino-acid biosynthesis; L-leucine biosynthesis; L-leucine from 3-methyl-2-oxobutanoate: step 2/4. Catalyzes the isomerization between 2-isopropylmalate and 3-isopropylmalate, via the formation of 2-isopropylmaleate. This chain is 3-isopropylmalate dehydratase large subunit, found in Haemophilus influenzae (strain ATCC 51907 / DSM 11121 / KW20 / Rd).